Reading from the N-terminus, the 360-residue chain is Alanine racemase (360 aa).

Lys36 functions as the Proton acceptor; specific for D-alanine in the catalytic mechanism. Residue Lys36 is modified to N6-(pyridoxal phosphate)lysine. Arg132 contributes to the substrate binding site. Tyr256 (proton acceptor; specific for L-alanine) is an active-site residue. Residue Met304 participates in substrate binding.

Belongs to the alanine racemase family. Pyridoxal 5'-phosphate is required as a cofactor.

It catalyses the reaction L-alanine = D-alanine. It functions in the pathway amino-acid biosynthesis; D-alanine biosynthesis; D-alanine from L-alanine: step 1/1. Functionally, catalyzes the interconversion of L-alanine and D-alanine. May also act on other amino acids. The sequence is that of Alanine racemase (alr) from Pasteurella multocida (strain Pm70).